We begin with the raw amino-acid sequence, 273 residues long: Beta-lactamase OXA-133 (273 aa).

Residues 1-17 (MNKYFTCYVVASLFFSG) form the signal peptide. Cys18 carries N-palmitoyl cysteine lipidation. Residue Cys18 is the site of S-diacylglycerol cysteine attachment. Ser79 acts as the Acyl-ester intermediate in catalysis. Lys82 is subject to N6-carboxylysine. 216 to 218 (KTG) is a substrate binding site.

It belongs to the class-D beta-lactamase family.

It is found in the cell membrane. It carries out the reaction a beta-lactam + H2O = a substituted beta-amino acid. In terms of biological role, catalyzes the hydrolysis of beta-lactam antibiotics. The sequence is that of Beta-lactamase OXA-133 from Acinetobacter radioresistens.